We begin with the raw amino-acid sequence, 421 residues long: Leucine-rich repeat-containing protein 42 (421 aa).

LRR repeat units follow at residues 149-170 (VLCS…EEIK), 174-195 (ELTR…LEHL), 202-222 (SVTQ…RKMT), 234-255 (NLAL…GYLF), and 259-280 (KLNC…KDKL). The interval 376–406 (PLLSQESKKSKKRAFKESEQEQSSPQSAKQK) is disordered. The segment covering 396-406 (EQSSPQSAKQK) has biased composition (low complexity). Serine 399 bears the Phosphoserine mark.

The protein belongs to the LRRC42 family.

This Mus musculus (Mouse) protein is Leucine-rich repeat-containing protein 42 (Lrrc42).